The primary structure comprises 738 residues: Putative cyclic nucleotide-gated ion channel 7 (738 aa).

At 1 to 104 the chain is on the cytoplasmic side; the sequence is MYKSQYISGQ…DKTLLVWNRL (104 aa). The helical transmembrane segment at 105 to 125 threads the bilayer; the sequence is FVISCILAVSVDPLFFYLPIV. The Extracellular portion of the chain corresponds to 126-139; sequence DNSGSSCIGIDTKL. Residues 140–160 form a helical membrane-spanning segment; that stretch reads AVTTTTLRTIVDVFYLTRMAL. The Cytoplasmic portion of the chain corresponds to 161-193; sequence QFRTAYIAPSSRVFGRGELVIDPAKIAERYLTR. A helical transmembrane segment spans residues 194-214; it reads YFVVDFLAVLPLPQIAVWKFL. Topologically, residues 215-227 are extracellular; that stretch reads HGSKGSDVLPTKT. The helical transmembrane segment at 228-248 threads the bilayer; that stretch reads ALLNIVIVQYIPRFVRFIPLT. At 249 to 268 the chain is on the cytoplasmic side; the sequence is SELKKTAGAFAEGAWAGAAY. The helical transmembrane segment at 269 to 289 threads the bilayer; that stretch reads YLLWYMLASHITGAFWYMLSV. Over 290 to 395 the chain is Extracellular; the sequence is ERNDTCWRFA…GQGLQTSTFP (106 aa). A helical membrane pass occupies residues 396–416; sequence GEVLFSIAIAIAGLLLFALLI. Residues 417 to 738 are Cytoplasmic-facing; it reads GNMQTYLQSL…KPPEPDFDAE (322 aa). Residues 502 to 632 and glutamate 573 contribute to the a nucleoside 3',5'-cyclic phosphate site; that span reads LFAN…TFRF. A calmodulin-binding region spans residues 618–633; the sequence is FRRLHSRQVQQTFRFY. The 30-residue stretch at 638–667 folds into the IQ domain; it reads RTWASCFIQAAWRRYSRRKNAELRRIEEKE. Disordered stretches follow at residues 671–693 and 715–738; these read GYED…SESS and LRSS…FDAE.

It belongs to the cyclic nucleotide-gated cation channel (TC 1.A.1.5) family. As to quaternary structure, homotetramer or heterotetramer.

The protein resides in the cell membrane. Putative cyclic nucleotide-gated ion channel. The sequence is that of Putative cyclic nucleotide-gated ion channel 7 (CNGC7) from Arabidopsis thaliana (Mouse-ear cress).